The sequence spans 213 residues: Probable transaldolase (213 aa).

The Schiff-base intermediate with substrate role is filled by K83.

This sequence belongs to the transaldolase family. Type 3B subfamily.

Its subcellular location is the cytoplasm. It carries out the reaction D-sedoheptulose 7-phosphate + D-glyceraldehyde 3-phosphate = D-erythrose 4-phosphate + beta-D-fructose 6-phosphate. It participates in carbohydrate degradation; pentose phosphate pathway; D-glyceraldehyde 3-phosphate and beta-D-fructose 6-phosphate from D-ribose 5-phosphate and D-xylulose 5-phosphate (non-oxidative stage): step 2/3. Transaldolase is important for the balance of metabolites in the pentose-phosphate pathway. This chain is Probable transaldolase, found in Geobacillus sp. (strain WCH70).